We begin with the raw amino-acid sequence, 106 residues long: Pyrimidine/purine nucleoside phosphorylase (106 aa).

The protein belongs to the nucleoside phosphorylase PpnP family.

The catalysed reaction is a purine D-ribonucleoside + phosphate = a purine nucleobase + alpha-D-ribose 1-phosphate. It catalyses the reaction adenosine + phosphate = alpha-D-ribose 1-phosphate + adenine. The enzyme catalyses cytidine + phosphate = cytosine + alpha-D-ribose 1-phosphate. It carries out the reaction guanosine + phosphate = alpha-D-ribose 1-phosphate + guanine. The catalysed reaction is inosine + phosphate = alpha-D-ribose 1-phosphate + hypoxanthine. It catalyses the reaction thymidine + phosphate = 2-deoxy-alpha-D-ribose 1-phosphate + thymine. The enzyme catalyses uridine + phosphate = alpha-D-ribose 1-phosphate + uracil. It carries out the reaction xanthosine + phosphate = alpha-D-ribose 1-phosphate + xanthine. In terms of biological role, catalyzes the phosphorolysis of diverse nucleosides, yielding D-ribose 1-phosphate and the respective free bases. Can use uridine, adenosine, guanosine, cytidine, thymidine, inosine and xanthosine as substrates. Also catalyzes the reverse reactions. This Burkholderia cenocepacia (strain ATCC BAA-245 / DSM 16553 / LMG 16656 / NCTC 13227 / J2315 / CF5610) (Burkholderia cepacia (strain J2315)) protein is Pyrimidine/purine nucleoside phosphorylase.